The following is a 526-amino-acid chain: Delayed-rectifier potassium channel regulatory subunit KCNS1 (526 aa).

Residues 1–217 are Cytoplasmic-facing; it reads MLMLLVRGTH…LTMENPGYSL (217 aa). A helical membrane pass occupies residues 218–239; that stretch reads PSKLFSCVSISVVLASIAAMCI. The Extracellular portion of the chain corresponds to 240–270; it reads HSLPEYQAREAAAAVAAVAAGRSPEGVRDDP. The chain crosses the membrane as a helical span at residues 271–293; the sequence is VLRRLEYFCIAWFSFEVSSRLLL. Over 294–304 the chain is Cytoplasmic; sequence APSTRNFFCHP. The chain crosses the membrane as a helical span at residues 305 to 322; it reads LNLIDIVSVLPFYLTLLA. The Extracellular portion of the chain corresponds to 323–337; it reads GVALGDQGGKEFGHL. Residues 338 to 358 traverse the membrane as a helical; Voltage-sensor segment; it reads GKVVQVFRLMRIFRVLKLARH. Topologically, residues 359-373 are cytoplasmic; it reads STGLRSLGATLKHSY. The helical transmembrane segment at 374 to 395 threads the bilayer; the sequence is REVGILLLYLAVGVSVFSGVAY. The Extracellular segment spans residues 396–408; it reads TAEKEEDVGFNTI. The helical intramembrane region spans 409 to 420; the sequence is PACWWWGTVSMT. Positions 421-426 match the Selectivity filter motif; that stretch reads TVGYGD. Residues 421-428 lie within the membrane without spanning it; the sequence is TVGYGDVV. Residues 429 to 435 are Extracellular-facing; it reads PVTVAGK. A helical membrane pass occupies residues 436–464; sequence LAASGCILGGILVVALPITIIFNKFSHFY. Residues 465–526 lie on the Cytoplasmic side of the membrane; the sequence is RRQKALEAAV…PSEPPHPQMY (62 aa). The tract at residues 491–526 is disordered; that stretch reads GVSEASLETSRETSQEGRSADLESQAPSEPPHPQMY. Over residues 499 to 511 the composition is skewed to basic and acidic residues; the sequence is TSRETSQEGRSAD.

The protein belongs to the potassium channel family. S (TC 1.A.1.2) subfamily. Kv9.1/KCNS1 sub-subfamily. In terms of assembly, heterotetramer with KCNB1. Heterotetramer with KCNB2. Does not form homomultimers.

It localises to the cell membrane. In terms of biological role, potassium channel regulatory subunit that modulate the delayed rectifier voltage-gated potassium channel activity of KCNB1 and KCNB2 by altering their kinetics, expression levels, and shifting the half-inactivation potential to more polarized values. While it does not form functional channels on its own, it can form functional heterotetrameric channels with KCNB1 and KCNB2. Each regulatory subunit has unique regulatory properties that can lead to extensive inhibition, significant changes in kinetics, and/or substantial shifts in the voltage dependencies of the inactivation process. In Pongo abelii (Sumatran orangutan), this protein is Delayed-rectifier potassium channel regulatory subunit KCNS1.